A 564-amino-acid chain; its full sequence is Efflux pump hmp6 (564 aa).

The segment covering 1 to 25 (MEKHAEPEKSLGDKEFQEKELHEKP) has biased composition (basic and acidic residues). The disordered stretch occupies residues 1–46 (MEKHAEPEKSLGDKEFQEKELHEKPAPAASEDISGDSSVNKEDGPD). The next 8 membrane-spanning stretches (helical) occupy residues 58-78 (LAVVMFALCISNFLVALDTTI), 96-118 (VGWYTSSYLLTNCAFQLFYGKLY), 125-145 (IVFTVAMIIFEIGSLLCGVAP), 156-176 (IAGLGSAGAFSGALIIVIHSV), 186-206 (GMIVGMYGLASVAAPLIGGAF), 214-234 (WCFYINLPCGGVAIAGLLFFF), 259-279 (FGTFFFLCSMICLLLALQMGG), and 289-309 (IIVLLVLFGLLLVAFIVVQFF). 2 N-linked (GlcNAc...) asparagine glycosylation sites follow: asparagine 312 and asparagine 322. The next 4 membrane-spanning stretches (helical) occupy residues 330 to 350 (IYMFCVGAQFLVLVTFMPIWF), 361 to 383 (SGIRSLPILLSNTFCVVLAGALV), 395 to 415 (ASVVLTSIGAGLLTTLTVDAS), and 452 to 472 (IGTAVMVFVQLLGGTILVSAA).

It belongs to the major facilitator superfamily. TCR/Tet family.

It localises to the cell membrane. In terms of biological role, efflux pump that might be required for efficient secretion of hypothemycin or other secondary metabolies produced by the hypothemycin gene cluster. The sequence is that of Efflux pump hmp6 from Hypomyces subiculosus (Nectria subiculosa).